The following is a 547-amino-acid chain: Membrane transporter D1 (547 aa).

The Cytoplasmic portion of the chain corresponds to 1 to 2; sequence MR. Residues 3-25 traverse the membrane as a helical segment; the sequence is ASVMLCAALGGFLFGYDTGVINA. The Extracellular portion of the chain corresponds to 26–43; it reads ALFQMKDHFGFSEHSWQY. The chain crosses the membrane as a helical span at residues 44–64; the sequence is ALIVAIAIAGAFVGAFISGFI. At 65 to 78 the chain is on the cytoplasmic side; it reads SAAFGRRPCIAVAD. The helical transmembrane segment at 79–99 threads the bilayer; that stretch reads ALFVIGSVLMGAAPNVEVVLV. Topologically, residues 100–101 are extracellular; sequence SR. A helical transmembrane segment spans residues 102–122; the sequence is VIVGLAIGISSATIPVYLAEV. At 123-136 the chain is on the cytoplasmic side; that stretch reads TSPKHRGATIVLNN. Residues 137–157 form a helical membrane-spanning segment; the sequence is LFLTGGQFVAAGFTAIMVVFT. Topologically, residues 158 to 164 are extracellular; the sequence is SKNIGWR. Residues 165 to 185 form a helical membrane-spanning segment; sequence VAIGIGALPAVVQAFCLLFFL. Residues 186 to 245 lie on the Cytoplasmic side of the membrane; it reads PESPRWLLSKGHADRAKAVADKFEVDLCEFQEGDELPSVRIDYRPLMARDMRFRVVLSSG. Residues 246–266 form a helical membrane-spanning segment; that stretch reads LQIIQQFSGINTIMYYSSVIL. Over 267 to 276 the chain is Extracellular; it reads YDAGFRDAIM. Residues 277–297 form a helical membrane-spanning segment; that stretch reads PVVLSIPLAFMNALFTAVAIF. Topologically, residues 298 to 308 are cytoplasmic; it reads TVDRFGRRRML. The helical transmembrane segment at 309–329 threads the bilayer; it reads LISVFGCLVLLVVIAIIGFFI. Residues 330 to 339 lie on the Extracellular side of the membrane; the sequence is GTRISYSVGG. The helical transmembrane segment at 340–360 threads the bilayer; the sequence is GLFLALLAVFLALYAPGIGCI. The Cytoplasmic portion of the chain corresponds to 361 to 385; sequence PWVIMGEIFPTHLRTSAASVATMAN. A helical membrane pass occupies residues 386–406; sequence WGANVLVSQVFPILMGAIGVG. Position 407 (Gly-407) is a topological domain, extracellular. Residues 408–428 traverse the membrane as a helical segment; the sequence is TFTIISGLMALGCIFVYFFAV. The Cytoplasmic segment spans residues 429–547; sequence ETKGLTLEQI…AIKAAPHEPK (119 aa). Disordered regions lie at residues 449 to 468 and 510 to 547; these read PPRFHEEGESGESGAGYRED and VSNKFEERATSSSSDPQSLENQDEVRQAAIKAAPHEPK. Positions 519–529 are enriched in polar residues; the sequence is TSSSSDPQSLE.

This sequence belongs to the major facilitator superfamily. Sugar transporter (TC 2.A.1.1) family.

The protein resides in the membrane. The sequence is that of Membrane transporter D1 from Leishmania donovani.